Consider the following 172-residue polypeptide: Biogenesis of lysosome-related organelles complex 1 subunit 6 (172 aa).

2 disordered regions span residues 1 to 36 (MSVP…SPDE) and 135 to 172 (RALK…AKRM). A coiled-coil region spans residues 63–167 (DLQRSKQALQ…FEREKQLTAR (105 aa)). Basic and acidic residues predominate over residues 143 to 164 (RQKEELEREQQREKEFEREKQL).

It belongs to the BLOC1S6 family. As to quaternary structure, interacts with BLOC1S4 and DTNBP1/BLOC1S7. Homodimer. Component of the biogenesis of lysosome-related organelles complex 1 (BLOC-1) composed of BLOC1S1, BLOC1S2, BLOC1S3, BLOC1S4, BLOC1S5, BLOC1S6, DTNBP1/BLOC1S7 and SNAPIN/BLOC1S8. Octamer composed of one copy each BLOC1S1, BLOC1S2, BLOC1S3, BLOC1S4, BLOC1S5, BLOC1S6, DTNBP1/BLOC1S7 and SNAPIN/BLOC1S8. The BLOC-1 complex associates with the AP-3 protein complex and membrane protein cargos. Interacts with BLOC1S5, F-actin, SNAP25 isoform 1 and isoform 2, SNAP47 and STX12. Post-translationally, phosphorylated. Widely expressed.

Its subcellular location is the cytoplasm. The protein localises to the membrane. In terms of biological role, component of the BLOC-1 complex, a complex that is required for normal biogenesis of lysosome-related organelles (LRO), such as platelet dense granules and melanosomes. In concert with the AP-3 complex, the BLOC-1 complex is required to target membrane protein cargos into vesicles assembled at cell bodies for delivery into neurites and nerve terminals. The BLOC-1 complex, in association with SNARE proteins, is also proposed to be involved in neurite extension. May play a role in intracellular vesicle trafficking, particularly in the vesicle-docking and fusion process. In Homo sapiens (Human), this protein is Biogenesis of lysosome-related organelles complex 1 subunit 6 (BLOC1S6).